Reading from the N-terminus, the 235-residue chain is Keratin-associated protein 4-16 (235 aa).

Residues 1 to 132 are 16 X 5 AA repeats of C-C-[GIKRQVHEML]-[SPTRV]-[STVQRCP]; the sequence is MCSSKMPCSP…CCCPCCCLRP (132 aa). A run of 16 repeats spans residues 23–27, 28–32, 33–37, 48–52, 53–57, 58–62, 63–67, 68–72, 78–82, 83–87, 88–92, 93–97, 103–107, 108–112, 118–122, and 128–132. The segment covering 203–224 has biased composition (pro residues); sequence SPSPSLPSLSPPLPSPPLPSPH. Residues 203-235 are disordered; that stretch reads SPSPSLPSLSPPLPSPPLPSPHFPSVNPKSMLQ.

Belongs to the KRTAP type 4 family. Interacts with hair keratins.

Its function is as follows. In the hair cortex, hair keratin intermediate filaments are embedded in an interfilamentous matrix, consisting of hair keratin-associated proteins (KRTAP), which are essential for the formation of a rigid and resistant hair shaft through their extensive disulfide bond cross-linking with abundant cysteine residues of hair keratins. The matrix proteins include the high-sulfur and high-glycine-tyrosine keratins. This chain is Keratin-associated protein 4-16, found in Homo sapiens (Human).